Consider the following 298-residue polypeptide: Aquaporin NIP2-1 (298 aa).

Residues asparagine 4, asparagine 13, and asparagine 26 are each glycosylated (N-linked (GlcNAc...) asparagine). The next 2 helical transmembrane spans lie at 51-71 and 85-105; these read VVSEVVATFLLVFMTCGAAGI and SIAGGLIVTVMIYAVGHISGA. An NPA 1 motif is present at residues 108–110; the sequence is NPA. The next 3 membrane-spanning stretches (helical) occupy residues 124-144, 166-186, and 194-214; these read IQVPFYWAAQFTGAICASFVL, SLVVEVIVTFNMMFVTLAVAT, and LAGLAVGSAVCITSIFAGAIS. The NPA 2 motif lies at 219–221; it reads NPA. Residues 237-257 form a helical membrane-spanning segment; that stretch reads WIYFLGPVMGTLSGAWTYTFI.

It belongs to the MIP/aquaporin (TC 1.A.8) family. NIP (TC 1.A.8.12) subfamily. Mainly expressed in the roots. In roots, it localizes in the main and lateral roots, but not in root hairs. Within a root, it localizes on the plasma membrane of the distal side of both exodermis and endodermis, where casparian strips exist (at protein level). Expressed low levels in leaves and anthers.

Its subcellular location is the cell membrane. Silicon influx transporter responsible for silicon transport from the external solution to the root cells. Is coupled with the silicon efflux transporter LSI2 in both exodermal and endodermal root cells for an efficient silicon transport across the cells into the stele. Silicon is beneficial to plant growth and helps plants to overcome abiotic and biotic stresses by preventing lodging (falling over) and increasing resistance to pests and diseases, as well as other stresses. Is coupled with LSI2 transporter in roots for efficient uptake of arsenite, which is further dispatched in shoots and grains. Mediates uptake of methylated arsenic species in roots. This is Aquaporin NIP2-1 from Oryza sativa subsp. japonica (Rice).